The following is a 310-amino-acid chain: Homoserine kinase (310 aa).

91–101 (PIGSGLGSSAC) is an ATP binding site.

It belongs to the GHMP kinase family. Homoserine kinase subfamily.

It is found in the cytoplasm. The catalysed reaction is L-homoserine + ATP = O-phospho-L-homoserine + ADP + H(+). Its pathway is amino-acid biosynthesis; L-threonine biosynthesis; L-threonine from L-aspartate: step 4/5. In terms of biological role, catalyzes the ATP-dependent phosphorylation of L-homoserine to L-homoserine phosphate. The chain is Homoserine kinase from Escherichia coli O139:H28 (strain E24377A / ETEC).